Consider the following 156-residue polypeptide: Small ribosomal subunit protein uS7 (156 aa).

It belongs to the universal ribosomal protein uS7 family. In terms of assembly, part of the 30S ribosomal subunit. Contacts proteins S9 and S11.

In terms of biological role, one of the primary rRNA binding proteins, it binds directly to 16S rRNA where it nucleates assembly of the head domain of the 30S subunit. Is located at the subunit interface close to the decoding center, probably blocks exit of the E-site tRNA. This chain is Small ribosomal subunit protein uS7, found in Prochlorococcus marinus (strain MIT 9211).